We begin with the raw amino-acid sequence, 145 residues long: Alpha-amylase/trypsin inhibitor CMa (145 aa).

An N-terminal signal peptide occupies residues 1–25 (MASKSSITPLLLAAVLASVFAAATA).

Belongs to the protease inhibitor I6 (cereal trypsin/alpha-amylase inhibitor) family. Heterotetramer of one CMa, one CMb and two CMd chains. In terms of processing, five disulfide bonds, which are essential for the inhibitor activity, are probably present. Endosperm.

The protein localises to the secreted. Its function is as follows. Alpha-amylase/trypsin inhibitor. It could be involved in insect defense mechanisms. This chain is Alpha-amylase/trypsin inhibitor CMa (IAT1), found in Hordeum vulgare (Barley).